The following is a 459-amino-acid chain: Putrescine aminotransferase (459 aa).

Residues 150–151 and Q274 each bind pyridoxal 5'-phosphate; that span reads GT. At K300 the chain carries N6-(pyridoxal phosphate)lysine. A pyridoxal 5'-phosphate-binding site is contributed by T332.

Belongs to the class-III pyridoxal-phosphate-dependent aminotransferase family. Putrescine aminotransferase subfamily. Pyridoxal 5'-phosphate serves as cofactor.

The enzyme catalyses an alkane-alpha,omega-diamine + 2-oxoglutarate = an omega-aminoaldehyde + L-glutamate. The catalysed reaction is putrescine + 2-oxoglutarate = 1-pyrroline + L-glutamate + H2O. It catalyses the reaction cadaverine + 2-oxoglutarate = 5-aminopentanal + L-glutamate. Its pathway is amine and polyamine degradation; putrescine degradation; 4-aminobutanal from putrescine (transaminase route): step 1/1. In terms of biological role, catalyzes the aminotransferase reaction from putrescine to 2-oxoglutarate, leading to glutamate and 4-aminobutanal, which spontaneously cyclizes to form 1-pyrroline. This is the first step in one of two pathways for putrescine degradation, where putrescine is converted into 4-aminobutanoate (gamma-aminobutyrate or GABA) via 4-aminobutanal. Also functions as a cadaverine transaminase in a a L-lysine degradation pathway to succinate that proceeds via cadaverine, glutarate and L-2-hydroxyglutarate. This Escherichia coli O81 (strain ED1a) protein is Putrescine aminotransferase.